Reading from the N-terminus, the 768-residue chain is MIKEVVKRDGTVVPFEKNKITMAIYKAMLSVKNGTMKDAEQLADKVVARLKDKERPSVEEIQDVVEDVLMTSKIDGKTFTDVAKSYILYREKRRAIREEKELMGVKDDLKLTLNAVKVLEARYLLKDEDGKIIETPRQMFRRVASHIGIVEALYDYIKYKKTGKVPENAEIIGKVSPTQEEVLRRAFGYMKEDGIIEGTFEEFMDFIQTKGTSAGHYINRFEEVMSSLDFVPNSPTLMNAGTKLGQLSACFVLPVGDSIEDIFETLKNTALIHKSGGGTGFSFSRLRPKDDIVGSTKGVASGPVSFMKIFDVTTDVIKQGGKRRGANMGILNYNHPDIMEFILSKDSENKVLSNFNISVGVTDDFFDKLDNDDYVDLVNPRTKKIMKRIKAREIWDAIIDQAWKTADPGLIFLDEINRKNPVKNVGDIESTNPCGEQPLLPYESCNLGSINLSKYVVDGKKIDFDRLRETVWTATRFLDDVIDANKFPVEQIKKVTRMTRKIGLGVMGFADMLIKLEIPYNSWEALEIGEKVMSFINDESHKASQALAEERGVFPAWYGSEWEKEGIKMRNSTTTTIAPTGTISIIAGCSSSIEPIFALAFVRHVLNGQELLEVNPLFEEKTRELGIYSEELMRQVAETGNLENVKINEEVKKIFVTAHEIDPQWHVLMQATFQRYCDSGVSKTINMRSDATREDIARAYRMAKDLHCKGITVYRDKSKTVQVLTAGTAETKKPEEKEVIELVTKMPDKYLKIDSTFDPACPTGKCDK.

The ATP-cone domain occupies 3 to 97 (KEVVKRDGTV…LYREKRRAIR (95 aa)). Substrate contacts are provided by residues S234, 249-250 (AC), G278, 432-436 (NPCGE), and 579-583 (PTGTI). A disulfide bridge connects residues C250 and C445. N432 serves as the catalytic Proton acceptor. The Cysteine radical intermediate role is filled by C434. E436 functions as the Proton acceptor in the catalytic mechanism.

The protein belongs to the ribonucleoside diphosphate reductase class-2 family. As to quaternary structure, monomer. It depends on adenosylcob(III)alamin as a cofactor.

The catalysed reaction is a 2'-deoxyribonucleoside 5'-diphosphate + [thioredoxin]-disulfide + H2O = a ribonucleoside 5'-diphosphate + [thioredoxin]-dithiol. Provides the precursors necessary for DNA synthesis. Catalyzes the biosynthesis of deoxyribonucleotides from the corresponding ribonucleotides. In Thermoplasma acidophilum (strain ATCC 25905 / DSM 1728 / JCM 9062 / NBRC 15155 / AMRC-C165), this protein is Vitamin B12-dependent ribonucleoside-diphosphate reductase.